A 520-amino-acid polypeptide reads, in one-letter code: ATP synthase subunit alpha (520 aa).

169–176 contributes to the ATP binding site; that stretch reads GDRKTGKT.

It belongs to the ATPase alpha/beta chains family. As to quaternary structure, F-type ATPases have 2 components, CF(1) - the catalytic core - and CF(0) - the membrane proton channel. CF(1) has five subunits: alpha(3), beta(3), gamma(1), delta(1), epsilon(1). CF(0) has three main subunits: a(1), b(2) and c(9-12). The alpha and beta chains form an alternating ring which encloses part of the gamma chain. CF(1) is attached to CF(0) by a central stalk formed by the gamma and epsilon chains, while a peripheral stalk is formed by the delta and b chains.

It localises to the cell membrane. It carries out the reaction ATP + H2O + 4 H(+)(in) = ADP + phosphate + 5 H(+)(out). In terms of biological role, produces ATP from ADP in the presence of a proton gradient across the membrane. The alpha chain is a regulatory subunit. In Oenococcus oeni (strain ATCC BAA-331 / PSU-1), this protein is ATP synthase subunit alpha.